A 134-amino-acid chain; its full sequence is Small ribosomal subunit protein uS8c (134 aa).

The protein belongs to the universal ribosomal protein uS8 family. In terms of assembly, part of the 30S ribosomal subunit.

It is found in the plastid. The protein resides in the chloroplast. Its function is as follows. One of the primary rRNA binding proteins, it binds directly to 16S rRNA central domain where it helps coordinate assembly of the platform of the 30S subunit. This Lepidium virginicum (Virginia pepperweed) protein is Small ribosomal subunit protein uS8c (rps8).